The following is a 286-amino-acid chain: Phosducin-like protein 2 (286 aa).

Residues S35 and S62 each carry the phosphoserine modification. Positions 96–286 (FGEVFHINKP…INDDDDGFFD (191 aa)) are thioredoxin fold.

This sequence belongs to the phosducin family. Interacts with the G protein beta-gamma subunit complex (STE4-STE18 complex). Interacts with CCT2; this interaction leads to inhibition of CCT complex mediated actin folding.

The protein resides in the cytoplasm. Functionally, essential for cell growth. Inhibits early G-protein signaling events following pheromone stimulation. Inhibits the folding activity of the chaperonin-containing T-complex (CCT) CCT2 which leads to inhibition of cytoskeletal actin folding. Plays a role in cell cycle progression in G1/S phase. In Saccharomyces cerevisiae (strain ATCC 204508 / S288c) (Baker's yeast), this protein is Phosducin-like protein 2.